Reading from the N-terminus, the 389-residue chain is Chalcone synthase (389 aa).

Cys-164 is a catalytic residue.

This sequence belongs to the thiolase-like superfamily. Chalcone/stilbene synthases family.

It catalyses the reaction (E)-4-coumaroyl-CoA + 3 malonyl-CoA + 3 H(+) = 2',4,4',6'-tetrahydroxychalcone + 3 CO2 + 4 CoA. It functions in the pathway secondary metabolite biosynthesis; flavonoid biosynthesis. Its function is as follows. The primary product of this enzyme is 4,2',4',6'-tetrahydroxychalcone (also termed naringenin-chalcone or chalcone) which can under specific conditions spontaneously isomerize into naringenin. This is Chalcone synthase (CHS) from Hydrangea macrophylla (Bigleaf hydrangea).